The sequence spans 50 residues: Protein PndA (50 aa).

Residues 5-25 traverse the membrane as a helical segment; it reads TFLMMLIVVCVTILCFVWMVR.

It belongs to the Hok/Gef family.

The protein resides in the cell inner membrane. In terms of biological role, when overexpressed kill the cells from the inside by interfering with a vital function in the cell membrane. Toxic component of a type I toxin-antitoxin (TA) system. When expressed is involved in cellular Mg(2+) release and degradation of stable RNA. In Escherichia coli, this protein is Protein PndA (pndA).